The following is an 862-amino-acid chain: MSSRFFYGGGSDSDSSSSDEEELYSDREEEEKSEEEESSEEEDETSEEEESDEETGARKFLKDVASDSEEEEEEEKVTVVKSAKDKRLDELENTIKLIENAKKINDWAVISTEFDKLNRQVAKITQSGPTPKIYIKAVADLEDFVNETVAKQKSGDKKLNASQAKGFNAAKQRIKKNNKDYGNLIDKYRKDKEDFMESDDEEAIPVIAAPRITKLERIEAPAAAIDDDGFATVGRGGKTLQYTPESILKHLRVIVESRGKKNTDRMEQIRTMEKLLEVAQTPYQRIRVYLTLISTRFDLTSTSSANYMAVDQWKSAEQDFSSLLSVLENNRDHVVFEGAEEWEDDEKQPTIAPGETLYIPGSIVSFAERLDDELTRSLQHIDPHTAEYIERLSDEKLLYTDLVRAQAYVEGLNEVEKTDPRQDSVNRVVMRRLEHVYFKPSQVITILEDATWKSLPSELDSSITPRASSGNVENLVLSLCNYLFKYSDGIIRARAMLCQIYFLALHDQYYRSRDLMLMSHLTENISNFDVSTQILFNRTLVQIGLCAFRSGLIYEAQNTLSEVCGSGRQKELLAQGIIMQRYSTVSPEQERLERQRQLPFHMHINLELLECIYLTSSMFLEVPLMAQTSSSPEMKRRVISKTFRRMLDYNERQVFTGPPENTRDGVIMSAKFLAAGDWKKAAEMLNSIKIWDLMPQPDKIKEMLSQQIQEEGLRTYLFTYAPFYDSLSIATLSNMFELSEKKISAIISRMISHEELAAALDQVNNAIVFRKGVELSRLQSQIVTLADKSMNLLEANEKTLEQRTQGMANAFQRDQGAGARGGRGSGRGGQARGGPRFPGGQQGRRPGGQQFGGGALGGAIKA.

The disordered stretch occupies residues 1 to 81; sequence MSSRFFYGGG…EEEEKVTVVK (81 aa). Residues 17–54 show a composition bias toward acidic residues; that stretch reads SSDEEELYSDREEEEKSEEEESSEEEDETSEEEESDEE. Basic and acidic residues predominate over residues 55-65; sequence TGARKFLKDVA. The segment covering 66–75 has biased composition (acidic residues); it reads SDSEEEEEEE. The region spanning 600-774 is the PCI domain; the sequence is FHMHINLELL…NAIVFRKGVE (175 aa). A disordered region spans residues 813–862; it reads RDQGAGARGGRGSGRGGQARGGPRFPGGQQGRRPGGQQFGGGALGGAIKA. Positions 818–862 are enriched in gly residues; that stretch reads GARGGRGSGRGGQARGGPRFPGGQQGRRPGGQQFGGGALGGAIKA.

It belongs to the eIF-3 subunit C family. Component of the eukaryotic translation initiation factor 3 (eIF-3) complex.

Its subcellular location is the cytoplasm. Functionally, component of the eukaryotic translation initiation factor 3 (eIF-3) complex, which is involved in protein synthesis of a specialized repertoire of mRNAs and, together with other initiation factors, stimulates binding of mRNA and methionyl-tRNAi to the 40S ribosome. The eIF-3 complex specifically targets and initiates translation of a subset of mRNAs involved in cell proliferation. This is Eukaryotic translation initiation factor 3 subunit C (nip1) from Aspergillus fumigatus (strain CBS 144.89 / FGSC A1163 / CEA10) (Neosartorya fumigata).